Here is an 874-residue protein sequence, read N- to C-terminus: Alanine--tRNA ligase (874 aa).

4 residues coordinate Zn(2+): H562, H566, C663, and H667.

This sequence belongs to the class-II aminoacyl-tRNA synthetase family. Requires Zn(2+) as cofactor.

Its subcellular location is the cytoplasm. The enzyme catalyses tRNA(Ala) + L-alanine + ATP = L-alanyl-tRNA(Ala) + AMP + diphosphate. Its function is as follows. Catalyzes the attachment of alanine to tRNA(Ala) in a two-step reaction: alanine is first activated by ATP to form Ala-AMP and then transferred to the acceptor end of tRNA(Ala). Also edits incorrectly charged Ser-tRNA(Ala) and Gly-tRNA(Ala) via its editing domain. The chain is Alanine--tRNA ligase from Bordetella pertussis (strain Tohama I / ATCC BAA-589 / NCTC 13251).